The primary structure comprises 384 residues: Farnesyl pyrophosphate synthase 1, mitochondrial (384 aa).

3 residues coordinate isopentenyl diphosphate: Lys-89, Arg-92, and Gln-128. Asp-135 and Asp-139 together coordinate Mg(2+). Residue Arg-144 coordinates dimethylallyl diphosphate. Isopentenyl diphosphate is bound at residue Arg-145. Lys-232, Thr-233, Gln-271, Lys-288, and Lys-297 together coordinate dimethylallyl diphosphate.

It belongs to the FPP/GGPP synthase family. The cofactor is Mg(2+). In terms of tissue distribution, the FPS1L mRNA accumulates preferentially in inflorescences, whereas the FPS1S mRNA is predominantly expressed in roots and inflorescences.

Its subcellular location is the mitochondrion. The protein resides in the cytoplasm. It carries out the reaction isopentenyl diphosphate + dimethylallyl diphosphate = (2E)-geranyl diphosphate + diphosphate. It catalyses the reaction isopentenyl diphosphate + (2E)-geranyl diphosphate = (2E,6E)-farnesyl diphosphate + diphosphate. It participates in isoprenoid biosynthesis; farnesyl diphosphate biosynthesis; farnesyl diphosphate from geranyl diphosphate and isopentenyl diphosphate: step 1/1. The protein operates within isoprenoid biosynthesis; geranyl diphosphate biosynthesis; geranyl diphosphate from dimethylallyl diphosphate and isopentenyl diphosphate: step 1/1. In terms of biological role, catalyzes the sequential condensation of isopentenyl pyrophosphate with the allylic pyrophosphates, dimethylallyl pyrophosphate, and then with the resultant geranylpyrophosphate to the ultimate product farnesyl pyrophosphate. The protein is Farnesyl pyrophosphate synthase 1, mitochondrial (FPS1) of Arabidopsis thaliana (Mouse-ear cress).